A 58-amino-acid polypeptide reads, in one-letter code: Large ribosomal subunit protein uL30 (58 aa).

Belongs to the universal ribosomal protein uL30 family. As to quaternary structure, part of the 50S ribosomal subunit.

In Cytophaga hutchinsonii (strain ATCC 33406 / DSM 1761 / CIP 103989 / NBRC 15051 / NCIMB 9469 / D465), this protein is Large ribosomal subunit protein uL30.